The primary structure comprises 392 residues: Cell division protein DivIB (392 aa).

The interval 1-88 (MSEKDNNLTP…TQSSEAPIEN (88 aa)) is disordered. Residues 1 to 131 (MSEKDNNLTP…KGSAPLLKKM (131 aa)) lie on the Cytoplasmic side of the membrane. Positions 14-32 (KHLEYQKRKAEEAKKEKKA) are enriched in basic and acidic residues. Acidic residues predominate over residues 58 to 76 (TRDEAESAELLEEGFETNN). A helical transmembrane segment spans residues 132 to 152 (WPALAVVVLVFVGSLYLISPL). In terms of domain architecture, POTRA spans 153-224 (SKISTFSVSG…NRFEAIVKEH (72 aa)). The Extracellular portion of the chain corresponds to 153-392 (SKISTFSVSG…TAQSTTTSSN (240 aa)). The segment at 368–392 (ISAQNAKKTDASSENTAQSTTTSSN) is disordered.

It belongs to the FtsQ/DivIB family. DivIB subfamily.

It is found in the cell membrane. Its function is as follows. Cell division protein that may be involved in stabilizing or promoting the assembly of the division complex. This is Cell division protein DivIB from Lactococcus lactis subsp. lactis (strain KF147).